Here is a 608-residue protein sequence, read N- to C-terminus: Elongation factor 4 (608 aa).

One can recognise a tr-type G domain in the interval 11-193 (KKIRNFSIIA…QIVEKVPEPS (183 aa)). GTP is bound by residues 23–28 (DHGKST) and 140–143 (NKID).

This sequence belongs to the TRAFAC class translation factor GTPase superfamily. Classic translation factor GTPase family. LepA subfamily.

The protein localises to the cell membrane. It carries out the reaction GTP + H2O = GDP + phosphate + H(+). Required for accurate and efficient protein synthesis under certain stress conditions. May act as a fidelity factor of the translation reaction, by catalyzing a one-codon backward translocation of tRNAs on improperly translocated ribosomes. Back-translocation proceeds from a post-translocation (POST) complex to a pre-translocation (PRE) complex, thus giving elongation factor G a second chance to translocate the tRNAs correctly. Binds to ribosomes in a GTP-dependent manner. The polypeptide is Elongation factor 4 (Listeria welshimeri serovar 6b (strain ATCC 35897 / DSM 20650 / CCUG 15529 / CIP 8149 / NCTC 11857 / SLCC 5334 / V8)).